The sequence spans 533 residues: 1-aminocyclopropane-1-carboxylate synthase 5 (533 aa).

Residue lysine 358 is modified to N6-(pyridoxal phosphate)lysine.

The protein belongs to the class-I pyridoxal-phosphate-dependent aminotransferase family. The cofactor is pyridoxal 5'-phosphate. In terms of tissue distribution, expressed in shoots and leaf blades. Expressed at low levels in leaf sheaths. Expressed in vasculature of roots and shoots.

The enzyme catalyses S-adenosyl-L-methionine = 1-aminocyclopropane-1-carboxylate + S-methyl-5'-thioadenosine + H(+). It participates in alkene biosynthesis; ethylene biosynthesis via S-adenosyl-L-methionine; ethylene from S-adenosyl-L-methionine: step 1/2. Its function is as follows. Catalyzes the formation of 1-aminocyclopropane-1-carboxylate, a direct precursor of ethylene in higher plants. This chain is 1-aminocyclopropane-1-carboxylate synthase 5, found in Oryza sativa subsp. japonica (Rice).